Consider the following 214-residue polypeptide: Response regulator GacA (214 aa).

The Response regulatory domain maps to 3 to 119 (KVLVVDDHDL…EMVQAIRLVF (117 aa)). A 4-aspartylphosphate modification is found at Asp54. The HTH luxR-type domain occupies 143-208 (NNSPFDLLSE…ELALLAVRHG (66 aa)). The segment at residues 167 to 186 (VQTISDKLCLSPKTVNTYRY) is a DNA-binding region (H-T-H motif).

Post-translationally, phosphorylated by LemA.

In terms of biological role, forms part of a two-component regulatory system GacA/GacA(LemA). May be involved in lesion formation, swarming and in the production of extracellular protease, syringomycin and N-acyl-L-homoserine lactone (acyl-HSL). The polypeptide is Response regulator GacA (gacA) (Pseudomonas syringae pv. syringae (strain B728a)).